A 117-amino-acid chain; its full sequence is MSNIIKAIEDAQLKQDLPKFSPGDTVIVQVKVKEGERERLQAFEGVVIAIRNRGLHSAFTVRKISNGEGVERTFQTHSPIVNSIEVKRRGAVRRAKLYYLRERSGKSARIKEKLAKK.

This sequence belongs to the bacterial ribosomal protein bL19 family.

Functionally, this protein is located at the 30S-50S ribosomal subunit interface and may play a role in the structure and function of the aminoacyl-tRNA binding site. The chain is Large ribosomal subunit protein bL19 from Aliivibrio salmonicida (strain LFI1238) (Vibrio salmonicida (strain LFI1238)).